We begin with the raw amino-acid sequence, 272 residues long: uncharacterized protein (272 aa).

Belongs to the chlamydial CPn_0389/CT_041/TC_0311 family.

This is an uncharacterized protein from Chlamydia pneumoniae (Chlamydophila pneumoniae).